The sequence spans 1116 residues: Large proline-rich protein bag6-B (1116 aa).

The region spanning 7–82 (MDVTVKTLDS…HLVERAPPQT (76 aa)) is the Ubiquitin-like domain. Disordered stretches follow at residues 76 to 114 (ERAPPQTQTSTSGPSTSSSTSPSSSNAAPVPGAPERNGN), 170 to 221 (EGQP…PSEY), 329 to 385 (STTG…HPHP), 473 to 502 (PAAPSFNFQPGAAATTPPAPGGATTTAPGA), 533 to 589 (GGSS…GTDQ), 640 to 678 (VPVSTSPPQSASQAPPPPSSPAPPAHSAPPPAAAPESLP), and 1058 to 1080 (TGAKPESSTECVKRELDNSEAQG). Residues 79–100 (PPQTQTSTSGPSTSSSTSPSSS) are compositionally biased toward low complexity. Residues 194 to 207 (RETLPQTTQNADGQ) are compositionally biased toward polar residues. Low complexity predominate over residues 208–219 (SNSTPTSHPSPS). Residues 344–353 (GNATPSTNTS) show a composition bias toward polar residues. Low complexity-rich tracts occupy residues 482–502 (PGAAATTPPAPGGATTTAPGA), 535–580 (SSTS…SVPS), and 641–652 (PVSTSPPQSASQ). The segment covering 653–672 (APPPPSSPAPPAHSAPPPAA) has biased composition (pro residues). Basic and acidic residues predominate over residues 1068–1080 (CVKRELDNSEAQG).

Component of the bag6/bat3 complex.

The protein resides in the cytoplasm. Its subcellular location is the cytosol. The protein localises to the nucleus. It is found in the secreted. It localises to the extracellular exosome. In terms of biological role, ATP-independent molecular chaperone preventing the aggregation of misfolded and hydrophobic patches-containing proteins. Functions as part of a cytosolic protein quality control complex, the bag6/bat3 complex, which maintains these client proteins in a soluble state and participates in their proper delivery to the endoplasmic reticulum or alternatively can promote their sorting to the proteasome where they undergo degradation. The bag6/bat3 complex is involved in the post-translational delivery of tail-anchored/type II transmembrane proteins to the endoplasmic reticulum membrane. Similarly, the bag6/bat3 complex also functions as a sorting platform for proteins of the secretory pathway that are mislocalized to the cytosol either delivering them to the proteasome for degradation or to the endoplasmic reticulum. The bag6/bat3 complex also plays a role in the endoplasmic reticulum-associated degradation (ERAD), a quality control mechanism that eliminates unwanted proteins of the endoplasmic reticulum through their retrotranslocation to the cytosol and their targeting to the proteasome. It maintains these retrotranslocated proteins in an unfolded yet soluble state condition in the cytosol to ensure their proper delivery to the proteasome. Also required for selective ubiquitin-mediated degradation of defective nascent chain polypeptides by the proteasome. Also involved in endoplasmic reticulum stress-induced pre-emptive quality control, a mechanism that selectively attenuates the translocation of newly synthesized proteins into the endoplasmic reticulum and reroutes them to the cytosol for proteasomal degradation. May ensure the proper degradation of these proteins and thereby protects the endoplasmic reticulum from protein overload upon stress. By stabilizing a large spectrum of proteins, may indirectly affect different biological processes including apoptosis. By controlling the steady-state expression of the IGF1R receptor, indirectly regulates the insulin-like growth factor receptor signaling pathway. Its function is as follows. When nuclear, may also act as a component of some chromatin regulator complex. This is Large proline-rich protein bag6-B from Xenopus laevis (African clawed frog).